The following is a 298-amino-acid chain: Diphthine methyl ester synthase (298 aa).

S-adenosyl-L-methionine contacts are provided by residues Leu-9, Asp-85, Gly-88, 113 to 114, Leu-164, Leu-222, and His-247; that span reads SV.

The protein belongs to the diphthine synthase family.

The protein resides in the cytoplasm. The catalysed reaction is 2-[(3S)-amino-3-carboxypropyl]-L-histidyl-[translation elongation factor 2] + 4 S-adenosyl-L-methionine = diphthine methyl ester-[translation elongation factor 2] + 4 S-adenosyl-L-homocysteine + 3 H(+). Its pathway is protein modification; peptidyl-diphthamide biosynthesis. Its function is as follows. S-adenosyl-L-methionine-dependent methyltransferase that catalyzes four methylations of the modified target histidine residue in translation elongation factor 2 (EF-2), to form an intermediate called diphthine methyl ester. The four successive methylation reactions represent the second step of diphthamide biosynthesis. This chain is Diphthine methyl ester synthase (DPH5), found in Kluyveromyces lactis (strain ATCC 8585 / CBS 2359 / DSM 70799 / NBRC 1267 / NRRL Y-1140 / WM37) (Yeast).